Consider the following 341-residue polypeptide: LIM and senescent cell antigen-like-containing domain protein 2 (341 aa).

5 LIM zinc-binding domains span residues 13–74, 76–133, 138–195, 196–255, and 256–315; these read AVCQ…LFAP, CGSC…EKAK, YICQ…KMGV, PICG…LFGD, and VCYN…FPLE. Phe-22 is modified (phosphoserine). At Thr-327 the chain carries Phosphothreonine. Residue Ser-328 is modified to Phosphoserine.

Interacts with TGFB1I1. Interacts with integrin-linked protein kinase 1 (ILK) via the first LIM domain, and in competition with LIMS1. Part of the heterotrimeric IPP complex composed of integrin-linked kinase (ILK), LIMS1 or LIMS2, and PARVA.

It is found in the nucleus. It localises to the cell junction. The protein localises to the focal adhesion. Its subcellular location is the cell membrane. Adapter protein in a cytoplasmic complex linking beta-integrins to the actin cytoskeleton, bridges the complex to cell surface receptor tyrosine kinases and growth factor receptors. Plays a role in modulating cell spreading and migration. The sequence is that of LIM and senescent cell antigen-like-containing domain protein 2 (LIMS2) from Homo sapiens (Human).